A 352-amino-acid chain; its full sequence is Nicotinate-nucleotide--dimethylbenzimidazole phosphoribosyltransferase (352 aa).

Residue Glu-316 is the Proton acceptor of the active site.

It belongs to the CobT family.

The enzyme catalyses 5,6-dimethylbenzimidazole + nicotinate beta-D-ribonucleotide = alpha-ribazole 5'-phosphate + nicotinate + H(+). The protein operates within nucleoside biosynthesis; alpha-ribazole biosynthesis; alpha-ribazole from 5,6-dimethylbenzimidazole: step 1/2. Functionally, catalyzes the synthesis of alpha-ribazole-5'-phosphate from nicotinate mononucleotide (NAMN) and 5,6-dimethylbenzimidazole (DMB). The sequence is that of Nicotinate-nucleotide--dimethylbenzimidazole phosphoribosyltransferase from Clostridium acetobutylicum (strain ATCC 824 / DSM 792 / JCM 1419 / IAM 19013 / LMG 5710 / NBRC 13948 / NRRL B-527 / VKM B-1787 / 2291 / W).